Consider the following 343-residue polypeptide: Matrix protein (343 aa).

Belongs to the morbillivirus/respirovirus/rubulavirus M protein family. As to quaternary structure, homodimer. Dimerization is critical for virion formation. Interacts with host ANP32B.

Its subcellular location is the virion. It localises to the host cell membrane. Its function is as follows. The M protein has a crucial role in virus assembly and interacts with the RNP complex as well as with the viral membrane. Associates with phosphatidylserine (PS) and phosphatidylinositol 4,5-bisphosphate (PIP2) at the plasma membrane. Interaction with PIP2 triggers matrix protein lattice polymerization. Matrix proteins induce host membrane deformation and curvature necessary for virion assembly/budding. The chain is Matrix protein (M) from Measles virus (strain Biken) (MeV).